A 351-amino-acid polypeptide reads, in one-letter code: Phosphoribosylformylglycinamidine cyclo-ligase (351 aa).

Belongs to the AIR synthase family.

It localises to the cytoplasm. The catalysed reaction is 2-formamido-N(1)-(5-O-phospho-beta-D-ribosyl)acetamidine + ATP = 5-amino-1-(5-phospho-beta-D-ribosyl)imidazole + ADP + phosphate + H(+). Its pathway is purine metabolism; IMP biosynthesis via de novo pathway; 5-amino-1-(5-phospho-D-ribosyl)imidazole from N(2)-formyl-N(1)-(5-phospho-D-ribosyl)glycinamide: step 2/2. This chain is Phosphoribosylformylglycinamidine cyclo-ligase, found in Burkholderia ambifaria (strain MC40-6).